A 96-amino-acid chain; its full sequence is RxLR effector protein PITG_11507 (96 aa).

An N-terminal signal peptide occupies residues 1–19; that stretch reads MRLSFIIVAVSLLAGGSGA. The disordered stretch occupies residues 27–59; that stretch reads SDVLTSRGTNEGARTGKRSLRYDSNVERTGEED. The RxLR-dEER motif lies at 44–59; that stretch reads RSLRYDSNVERTGEED. The segment covering 46 to 55 has biased composition (basic and acidic residues); it reads LRYDSNVERT.

Belongs to the RxLR effector family.

The protein resides in the secreted. The protein localises to the host nucleus. Its subcellular location is the host cytoplasm. Effector that enhances P.infestans colonization of Nicotiana benthamiana leaves. This chain is RxLR effector protein PITG_11507, found in Phytophthora infestans (strain T30-4) (Potato late blight agent).